The sequence spans 684 residues: NAD(P)H-quinone oxidoreductase subunit 5, chloroplastic (684 aa).

14 helical membrane passes run 16–36 (WAFP…XLSI), 65–85 (IDPL…MVLI), 96–116 (GYLI…GLVT), 123–143 (IYIF…FWFT), 161–181 (GDFG…SFEF), 206–226 (AALL…HVWL), 234–254 (TPIS…FLVA), 256–276 (LLPL…IGII), 303–323 (LXYM…FHLI), 330–350 (ALLF…VGYS), 372–392 (TSFL…CFWS), 401–421 (WLYS…TAFY), 524–544 (LFPL…GIPF), and 583–603 (IFSV…YKPI).

The protein belongs to the complex I subunit 5 family. As to quaternary structure, NDH is composed of at least 16 different subunits, 5 of which are encoded in the nucleus.

It is found in the plastid. The protein localises to the chloroplast thylakoid membrane. It catalyses the reaction a plastoquinone + NADH + (n+1) H(+)(in) = a plastoquinol + NAD(+) + n H(+)(out). It carries out the reaction a plastoquinone + NADPH + (n+1) H(+)(in) = a plastoquinol + NADP(+) + n H(+)(out). Its function is as follows. NDH shuttles electrons from NAD(P)H:plastoquinone, via FMN and iron-sulfur (Fe-S) centers, to quinones in the photosynthetic chain and possibly in a chloroplast respiratory chain. The immediate electron acceptor for the enzyme in this species is believed to be plastoquinone. Couples the redox reaction to proton translocation, and thus conserves the redox energy in a proton gradient. This chain is NAD(P)H-quinone oxidoreductase subunit 5, chloroplastic (ndhF), found in Sesamum indicum (Oriental sesame).